Reading from the N-terminus, the 618-residue chain is Mitochondrial Rho GTPase 1 (618 aa).

The Cytoplasmic portion of the chain corresponds to Met1 to Phe592. The Miro 1 domain maps to Lys2–His168. Residues Arg14, Gly16, Lys17, Thr18, and Ser19 each contribute to the GTP site. Thr18 serves as a coordination point for Mg(2+). The Mg(2+) site is built by Pro35 and Asp57. Ser59 is a GTP binding site. Lys92 is modified (N6-acetyllysine). GTP contacts are provided by Asn118, Lys119, Asp121, Ala149, and Lys150. Lys153 is covalently cross-linked (Glycyl lysine isopeptide (Lys-Gly) (interchain with G-Cter in ubiquitin)). In terms of domain architecture, EF-hand 1 spans Ala184–Thr219. Residues Asp197, Asp199, Asp201, Thr203, and Glu208 each coordinate Ca(2+). Lys235 is covalently cross-linked (Glycyl lysine isopeptide (Lys-Gly) (interchain with G-Cter in ubiquitin)). Positions His304–Ile339 constitute an EF-hand 2 domain. The Ca(2+) site is built by Asp317, Asp319, Asp321, Ala323, and Glu328. Residues Arg416–Tyr579 enclose the Miro 2 domain. Asn428, Cys429, Gly430, Lys431, Ser432, Gly433, and Lys447 together coordinate GTP. Residue Asn428 participates in Mg(2+) binding. 15 residues coordinate GDP: Asn428, Cys429, Gly430, Lys431, Ser432, Gly433, Lys447, Lys454, Ser477, Glu478, Lys528, Asp530, Thr558, Cys559, and Asn560. Residues Lys528, Asp530, Thr558, and Cys559 each contribute to the GTP site. Lys572 participates in a covalent cross-link: Glycyl lysine isopeptide (Lys-Gly) (interchain with G-Cter in ubiquitin). Residues Trp593 to Leu615 traverse the membrane as a helical; Anchor for type IV membrane protein segment. Residues Lys616–Arg618 are Mitochondrial intermembrane-facing.

Belongs to the mitochondrial Rho GTPase family. As to quaternary structure, homodimer. Interacts with the kinesin-binding proteins TRAK1/OIP106 and TRAK2/GRIF1, forming a link between mitochondria and the trafficking apparatus of the microtubules. Interacts with RAP1GDS1. Interacts with ARMCX1. Found in a complex with KIF5B, OGT, RHOT2 and TRAK1. In terms of processing, ubiquitinated by PRKN during mitophagy, leading to its degradation and enhancement of mitophagy. Deubiquitinated by USP30. Acetylation on Lys-92 decreases sensitivity of mitochondrial transport to elevated Ca(2+) levels, increases mitochondrial transport and promotes axon growth. Deacetylated by HDAC6 which blocks mitochondrial transport and mediates axon growth inhibition. In terms of tissue distribution, ubiquitously expressed. Expressed at high level in heart and skeletal muscle.

The protein resides in the mitochondrion outer membrane. The enzyme catalyses GTP + H2O = GDP + phosphate + H(+). It catalyses the reaction ATP + H2O = ADP + phosphate + H(+). The catalysed reaction is UTP + H2O = UDP + phosphate + H(+). Atypical mitochondrial nucleoside-triphosphatase (NTPase) involved in mitochondrial trafficking. Probably involved in control of anterograde transport of mitochondria and their subcellular distribution. Promotes mitochondrial fission during high calcium conditions. Can hydrolyze GTP, ATP and UTP. In Homo sapiens (Human), this protein is Mitochondrial Rho GTPase 1 (RHOT1).